The following is a 39-amino-acid chain: L-amino-acid oxidase (39 aa).

Belongs to the flavin monoamine oxidase family. FIG1 subfamily. In terms of assembly, monomer. This is in contrast with most of its orthologs, that are non-covalently linked homodimers. FAD serves as cofactor. N-glycosylated. In terms of tissue distribution, expressed by the venom gland.

The protein resides in the secreted. The catalysed reaction is an L-alpha-amino acid + O2 + H2O = a 2-oxocarboxylate + H2O2 + NH4(+). It catalyses the reaction L-leucine + O2 + H2O = 4-methyl-2-oxopentanoate + H2O2 + NH4(+). In terms of biological role, catalyzes an oxidative deamination of predominantly hydrophobic and aromatic L-amino acids, thus producing hydrogen peroxide that may contribute to the diverse toxic effects of this enzyme. Shows activity on L-Leu. Exhibits diverse biological activities, such as hemorrhage, hemolysis, edema, apoptosis of vascular endothelial cells or tumor cell lines, and antiparasitic activities, as well as regulation of platelet aggregation. Effects of snake L-amino oxidases on platelets are controversial, since they either induce aggregation or inhibit agonist-induced aggregation. These different effects are probably due to different experimental conditions. In addition, this protein inhibits dose-dependently the growth of Gram-positive, Gram-negative bacteria and yeast, probably by the generation of hydrogen peroxide. The sequence is that of L-amino-acid oxidase from Bothrops marajoensis (Marajo lancehead).